The following is a 522-amino-acid chain: Glycerol kinase (522 aa).

Residue Thr-15 participates in substrate binding. Position 19 (Arg-19) interacts with ATP. Substrate is bound by residues 89 to 90 (RE), Tyr-143, and 255 to 256 (DQ). Residues Thr-276, Gly-321, and 430–434 (GATAN) each bind ATP.

Belongs to the FGGY kinase family. As to expression, highly expressed in germinating seeds and senescent leaves, and at lower levels in roots, leaves, flowers and siliques.

It is found in the cytoplasm. The protein resides in the cytosol. It catalyses the reaction glycerol + ATP = sn-glycerol 3-phosphate + ADP + H(+). It functions in the pathway polyol metabolism; glycerol degradation via glycerol kinase pathway; sn-glycerol 3-phosphate from glycerol: step 1/1. Key enzyme in the regulation of glycerol uptake and metabolism. Required for resistance to nonhost Pseudomonas bacteria and to the pathogenic fungus B.cinerea. The sequence is that of Glycerol kinase (GLPK) from Arabidopsis thaliana (Mouse-ear cress).